A 625-amino-acid polypeptide reads, in one-letter code: MAKVIGIDLGTTNSAMAVYEGNEAKIIANKEGKNTTPSIVAFTDKGEILVGEPAKRQAVTNPKKTVYSIKRIMGLMFNEDKAKEAEKRLPYNIVDRNGACAVEIADKIYTPQEISAKILMKLKEDAQSYLGEDVTEAVITVPAYFNDSQRKATKEAGTIAGLNVLRIINEPTSAALAYGLDKKEAEKIMVYDLGGGTFDVTVLETGDNVVEVLATGGDAFLGGDDFDNRIIDWAAEEFKSDEGIDLKNDVMALQRLKDAAENAKKELSSAQETEINLPFITADASGPKHLVKKITRAKFESLIDDLIEDTIKKIEFVIKDAGLSQSDISEVVMVGGSTRIPKVQERVKAFISKDLNKSVNPDEVVAVGAAIQGGVLKGDVKDVLLLDVTPLSLGIETAGGISTKVVERGVTIPTKKTQIFSTYEDNQPAVSINVLQGERELARDNKSLGRFDLSGIPAAPRGVPQIEVTFDIDANGILTVSAKDKATGKSQEIKISGSSGLSDAEIEKMVKEAELHKEEDTKKKAIIELRNNADSLVYQTKKSLEEFKDKIESAEVEKIQSAVAALEETLKNENASKEELEEKIKNLTEVSHKLAEAAYAKEQGGTQQGTDTKKKDDDVIDAEVE.

Phosphothreonine; by autocatalysis is present on T197. Residues 598 to 625 (AYAKEQGGTQQGTDTKKKDDDVIDAEVE) form a disordered region.

It belongs to the heat shock protein 70 family.

Its function is as follows. Acts as a chaperone. This is Chaperone protein DnaK from Helicobacter hepaticus (strain ATCC 51449 / 3B1).